The chain runs to 118 residues: Large ribosomal subunit protein bL20 (118 aa).

This sequence belongs to the bacterial ribosomal protein bL20 family.

In terms of biological role, binds directly to 23S ribosomal RNA and is necessary for the in vitro assembly process of the 50S ribosomal subunit. It is not involved in the protein synthesizing functions of that subunit. The polypeptide is Large ribosomal subunit protein bL20 (Serratia proteamaculans (strain 568)).